Consider the following 158-residue polypeptide: NAD(P)H-quinone oxidoreductase subunit J, chloroplastic (158 aa).

This sequence belongs to the complex I 30 kDa subunit family. As to quaternary structure, NDH is composed of at least 16 different subunits, 5 of which are encoded in the nucleus.

The protein resides in the plastid. It is found in the chloroplast thylakoid membrane. The catalysed reaction is a plastoquinone + NADH + (n+1) H(+)(in) = a plastoquinol + NAD(+) + n H(+)(out). It carries out the reaction a plastoquinone + NADPH + (n+1) H(+)(in) = a plastoquinol + NADP(+) + n H(+)(out). NDH shuttles electrons from NAD(P)H:plastoquinone, via FMN and iron-sulfur (Fe-S) centers, to quinones in the photosynthetic chain and possibly in a chloroplast respiratory chain. The immediate electron acceptor for the enzyme in this species is believed to be plastoquinone. Couples the redox reaction to proton translocation, and thus conserves the redox energy in a proton gradient. The protein is NAD(P)H-quinone oxidoreductase subunit J, chloroplastic of Aethionema grandiflorum (Persian stone-cress).